The chain runs to 257 residues: Phycoerythrobilin:ferredoxin oxidoreductase (257 aa).

This sequence belongs to the HY2 family.

The enzyme catalyses (3Z)-phycoerythrobilin + oxidized 2[4Fe-4S]-[ferredoxin] = 15,16-dihydrobiliverdin + reduced 2[4Fe-4S]-[ferredoxin] + 2 H(+). In terms of biological role, catalyzes the two-electron reduction of the C2 and C3(1) diene system of 15,16-dihydrobiliverdin. The sequence is that of Phycoerythrobilin:ferredoxin oxidoreductase from Prochlorococcus marinus (strain MIT 9303).